The primary structure comprises 246 residues: Anionic trypsin-2 (246 aa).

The signal sequence occupies residues 1-15 (MSALLILALVGAAVA). A propeptide spans 16–23 (FPVDDDDK) (activation peptide). The Peptidase S1 domain occupies 24 to 244 (IVGGYTCRES…YVDWIQNTIA (221 aa)). 6 disulfide bridges follow: C30–C160, C48–C64, C132–C233, C139–C206, C171–C185, and C196–C220. H63 (charge relay system) is an active-site residue. 4 residues coordinate Ca(2+): E75, N77, V80, and E85. Catalysis depends on D107, which acts as the Charge relay system. S200 acts as the Charge relay system in catalysis.

The protein belongs to the peptidase S1 family. Ca(2+) is required as a cofactor. In terms of tissue distribution, expressed in the pancreas, lung and kidney.

It is found in the secreted. The protein localises to the extracellular space. The enzyme catalyses Preferential cleavage: Arg-|-Xaa, Lys-|-Xaa.. This Mus musculus (Mouse) protein is Anionic trypsin-2 (Prss2).